A 336-amino-acid chain; its full sequence is Toluate 1,2-dioxygenase electron transfer component (336 aa).

Positions 3-97 constitute a 2Fe-2S ferredoxin-type domain; that stretch reads HKVATDFEDG…DCVIRVPAAS (95 aa). [2Fe-2S] cluster contacts are provided by cysteine 40, cysteine 45, cysteine 48, and cysteine 81. The tract at residues 99-336 is ferredoxin-reductase; that stretch reads VCKTQQAGYQ…FYYEKFAASA (238 aa). An FAD-binding FR-type domain is found at 104 to 204; the sequence is QAGYQAAISN…AGPLGAFYLR (101 aa).

Belongs to the bacterial ring-hydroxylating dioxygenase ferredoxin reductase family. As to quaternary structure, this dioxygenase system consists of three proteins: the two subunits of the hydroxylase component (XylX and XylY), and an electron transfer component (XylZ). FAD is required as a cofactor. [2Fe-2S] cluster serves as cofactor.

It carries out the reaction 2 reduced [2Fe-2S]-[ferredoxin] + NAD(+) + H(+) = 2 oxidized [2Fe-2S]-[ferredoxin] + NADH. Its function is as follows. Electron transfer component of toluate 1,2-dioxygenase system. This is Toluate 1,2-dioxygenase electron transfer component (xylZ) from Pseudomonas putida (Arthrobacter siderocapsulatus).